A 424-amino-acid polypeptide reads, in one-letter code: L-glutamine:2-deoxy-scyllo-inosose aminotransferase (424 aa).

K202 is modified (N6-(pyridoxal phosphate)lysine).

The protein belongs to the DegT/DnrJ/EryC1 family. L-glutamine:2-deoxy-scyllo-inosose/scyllo-inosose aminotransferase subfamily. It depends on pyridoxal 5'-phosphate as a cofactor.

The catalysed reaction is 2-deoxy-L-scyllo-inosose + L-glutamine = 2-deoxy-scyllo-inosamine + 2-oxoglutaramate. It catalyses the reaction 3-amino-2,3-dideoxy-scyllo-inosose + L-glutamine = 2-deoxystreptamine + 2-oxoglutaramate. It participates in metabolic intermediate biosynthesis; 2-deoxystreptamine biosynthesis; 2-deoxystreptamine from D-glucose 6-phosphate: step 2/4. It functions in the pathway metabolic intermediate biosynthesis; 2-deoxystreptamine biosynthesis; 2-deoxystreptamine from D-glucose 6-phosphate: step 4/4. Its pathway is antibiotic biosynthesis; neomycin biosynthesis. In terms of biological role, catalyzes the PLP-dependent transamination of 2-deoxy-scyllo-inosose (2-DOI) to form 2-deoxy-scyllo-inosamine (2-DOIA) using L-glutamine as the amino donor. Also catalyzes the transamination of 3-amino-2,3-dideoxy-scyllo-inosose (keto-2-DOIA) into 2-deoxystreptamine (2-DOS). The polypeptide is L-glutamine:2-deoxy-scyllo-inosose aminotransferase (neoB) (Streptomyces fradiae (Streptomyces roseoflavus)).